The primary structure comprises 210 residues: Thymidylate kinase (210 aa).

Residue 10-17 (GLEGAGKT) coordinates ATP.

This sequence belongs to the thymidylate kinase family.

It carries out the reaction dTMP + ATP = dTDP + ADP. In terms of biological role, phosphorylation of dTMP to form dTDP in both de novo and salvage pathways of dTTP synthesis. This Actinobacillus succinogenes (strain ATCC 55618 / DSM 22257 / CCUG 43843 / 130Z) protein is Thymidylate kinase.